The chain runs to 680 residues: Tumor protein 63 (680 aa).

The transcription activation stretch occupies residues 1–107 (MNFETSRCAT…MQDSDLSDPM (107 aa)). Residues 123–157 (QIQNGSSSTSPYNTDHAQNSVTAPSPYAQPSSTFD) are compositionally biased toward polar residues. Residues 123-171 (QIQNGSSSTSPYNTDHAQNSVTAPSPYAQPSSTFDALSPSPAIPSNTDY) form a disordered region. The DNA-binding element occupies 170–362 (DYPGPHSFDV…KADEDSIRKQ (193 aa)). Residues Cys-244, His-247, Cys-308, and Cys-312 each coordinate Zn(2+). The span at 351–360 (DRKADEDSIR) shows a compositional bias: basic and acidic residues. 2 disordered regions span residues 351 to 393 (DRKA…IKKR) and 435 to 472 (YRQQ…MNSM). The segment at 352 to 388 (RKADEDSIRKQQVSDSTKNGDGTKRPFRQNTHGIQMT) is interaction with HIPK2. Composition is skewed to polar residues over residues 361-371 (KQQVSDSTKNG) and 379-389 (RQNTHGIQMTS). Positions 394-443 (RSPDDELLYLPVRGRETYEMLLKIKESLELMQYLPQHTIETYRQQQQQQH) are oligomerization. Positions 437 to 450 (QQQQQQHQHLLQKQ) are enriched in low complexity. Polar residues predominate over residues 451–472 (TSIQSPSSYGNSSPPLNKMNSM). Positions 541–607 (PPYPTDCSIV…WKGILDHRQL (67 aa)) constitute an SAM domain. The segment at 610 to 680 (FSSPSHLLRT…KQQRIKEEGE (71 aa)) is transactivation inhibition. Lys-676 is covalently cross-linked (Glycyl lysine isopeptide (Lys-Gly) (interchain with G-Cter in SUMO)).

This sequence belongs to the p53 family. In terms of assembly, binds DNA as a homotetramer. Isoform composition of the tetramer may determine transactivation activity. Isoforms Alpha and Gamma interact with HIPK2. Interacts with SSRP1, leading to stimulate coactivator activity. Isoform 1 and isoform 2 interact with WWP1. Interacts with PDS5A. Isoform 5 (via activation domain) interacts with NOC2L. Zn(2+) is required as a cofactor. In terms of processing, may be sumoylated. Ubiquitinated. Polyubiquitination involves WWP1 and leads to proteasomal degradation of this protein. In terms of tissue distribution, widely expressed, notably in heart, kidney, placenta, prostate, skeletal muscle, testis and thymus, although the precise isoform varies according to tissue type. Progenitor cell layers of skin, breast, eye and prostate express high levels of DeltaN-type isoforms. Isoform 10 is predominantly expressed in skin squamous cell carcinomas, but not in normal skin tissues.

The protein localises to the nucleus. Acts as a sequence specific DNA binding transcriptional activator or repressor. The isoforms contain a varying set of transactivation and auto-regulating transactivation inhibiting domains thus showing an isoform specific activity. Isoform 2 activates RIPK4 transcription. May be required in conjunction with TP73/p73 for initiation of p53/TP53 dependent apoptosis in response to genotoxic insults and the presence of activated oncogenes. Involved in Notch signaling by probably inducing JAG1 and JAG2. Plays a role in the regulation of epithelial morphogenesis. The ratio of DeltaN-type and TA*-type isoforms may govern the maintenance of epithelial stem cell compartments and regulate the initiation of epithelial stratification from the undifferentiated embryonal ectoderm. Required for limb formation from the apical ectodermal ridge. Activates transcription of the p21 promoter. The sequence is that of Tumor protein 63 (TP63) from Homo sapiens (Human).